Consider the following 141-residue polypeptide: Nucleoside diphosphate kinase (141 aa).

Residues Lys-11, Phe-59, Arg-87, Thr-93, Arg-104, and Asn-114 each contribute to the ATP site. The Pros-phosphohistidine intermediate role is filled by His-117.

Belongs to the NDK family. Homotetramer. Requires Mg(2+) as cofactor.

The protein localises to the cytoplasm. It carries out the reaction a 2'-deoxyribonucleoside 5'-diphosphate + ATP = a 2'-deoxyribonucleoside 5'-triphosphate + ADP. The catalysed reaction is a ribonucleoside 5'-diphosphate + ATP = a ribonucleoside 5'-triphosphate + ADP. Functionally, major role in the synthesis of nucleoside triphosphates other than ATP. The ATP gamma phosphate is transferred to the NDP beta phosphate via a ping-pong mechanism, using a phosphorylated active-site intermediate. In Chromobacterium violaceum (strain ATCC 12472 / DSM 30191 / JCM 1249 / CCUG 213 / NBRC 12614 / NCIMB 9131 / NCTC 9757 / MK), this protein is Nucleoside diphosphate kinase.